Reading from the N-terminus, the 1586-residue chain is MKKHKFRETLKSFFEPHFDHEKGEMLKGTKTEIDEKVNKILGMVESGDVNEDESNRQVVADLVKEFYSEYQSLYRQYDDLTGEIRKKVNGKGESSSSSSSDSDSDHSSKRKVKRNGNGKVEKDVELVTGALKQQIEAANLEIADLKGKLTTTVEEKEAVDSELELALMKLKESEEISSKLKLETEKLEDEKSIALSDNRELHQKLEVAGKTETDLNQKLEDIKKERDELQTERDNGIKRFQEAEKVAEDWKTTSDQLKDETSNLKQQLEASEQRVSELTSGMNSAEEENKSLSLKVSEISDVIQQGQTTIQELISELGEMKEKYKEKESEHSSLVELHKTHERESSSQVKELEAHIESSEKLVADFTQSLNNAEEEKKLLSQKIAELSNEIQEAQNTMQELMSESGQLKESHSVKERELFSLRDIHEIHQRDSSTRASELEAQLESSKQQVSDLSASLKAAEEENKAISSKNVETMNKLEQTQNTIQELMAELGKLKDSHREKESELSSLVEVHETHQRDSSIHVKELEEQVESSKKLVAELNQTLNNAEEEKKVLSQKIAELSNEIKEAQNTIQELVSESGQLKESHSVKDRDLFSLRDIHETHQRESSTRVSELEAQLESSEQRISDLTVDLKDAEEENKAISSKNLEIMDKLEQAQNTIKELMDELGELKDRHKEKESELSSLVKSADQQVADMKQSLDNAEEEKKMLSQRILDISNEIQEAQKTIQEHMSESEQLKESHGVKERELTGLRDIHETHQRESSTRLSELETQLKLLEQRVVDLSASLNAAEEEKKSLSSMILEITDELKQAQSKVQELVTELAESKDTLTQKENELSSFVEVHEAHKRDSSSQVKELEARVESAEEQVKELNQNLNSSEEEKKILSQQISEMSIKIKRAESTIQELSSESERLKGSHAEKDNELFSLRDIHETHQRELSTQLRGLEAQLESSEHRVLELSESLKAAEEESRTMSTKISETSDELERTQIMVQELTADSSKLKEQLAEKESKLFLLTEKDSKSQVQIKELEATVATLELELESVRARIIDLETEIASKTTVVEQLEAQNREMVARISELEKTMEERGTELSALTQKLEDNDKQSSSSIETLTAEIDGLRAELDSMSVQKEEVEKQMVCKSEEASVKIKRLDDEVNGLRQQVASLDSQRAELEIQLEKKSEEISEYLSQITNLKEEIINKVKVHESILEEINGLSEKIKGRELELETLGKQRSELDEELRTKKEENVQMHDKINVASSEIMALTELINNLKNELDSLQVQKSETEAELEREKQEKSELSNQITDVQKALVEQEAAYNTLEEEHKQINELFKETEATLNKVTVDYKEAQRLLEERGKEVTSRDSTIGVHEETMESLRNELEMKGDEIETLMEKISNIEVKLRLSNQKLRVTEQVLTEKEEAFRKEEAKHLEEQALLEKNLTMTHETYRGMIKEIADKVNITVDGFQSMSEKLTEKQGRYEKTVMEASKILWTATNWVIERNHEKEKMNKEIEKKDEEIKKLGGKVREDEKEKEMMKETLMGLGEEKREAIRQLCVWIDHHRSRCEYLEEVLSKTVVARGQRRVSQRT.

The region spanning 10–84 is the NAB domain; that stretch reads LKSFFEPHFD…RQYDDLTGEI (75 aa). Residues 88 to 119 are disordered; it reads VNGKGESSSSSSSDSDSDHSSKRKVKRNGNGK. Coiled coils occupy residues 128–411, 437–1196, 1225–1336, and 1372–1406; these read TGAL…LKES, ASEL…LKEE, LETL…TEAT, and MESLRNELEMKGDEIETLMEKISNIEVKLRLSNQK. 5 LRR repeats span residues 173–187, 188–210, 216–239, 261–285, and 287–309; these read SEEISSKLKLETEKL, EDEKSIALSDNRELHQKLEVAGK, NQKLEDIKKERDELQTERDNGIKR, TSNLKQQLEASEQRVSELTSGMNSA, and EENKSLSLKVSEISDVIQQGQTT. The segment covering 249 to 262 has biased composition (basic and acidic residues); sequence DWKTTSDQLKDETS. The disordered stretch occupies residues 249-286; the sequence is DWKTTSDQLKDETSNLKQQLEASEQRVSELTSGMNSAE. Positions 325–353 are disordered; that stretch reads KEKESEHSSLVELHKTHERESSSQVKELE. LRR repeat units follow at residues 384–410, 437–461, 473–498, 560–586, 613–637, 649–674, 768–792, 824–850, 856–880, 902–929, 944–968, 990–1014, 1077–1101, 1120–1144, 1195–1220, 1247–1272, 1372–1396, 1398–1417, 1426–1448, and 1450–1474; these read IAELSNEIQEAQNTMQELMSESGQLKE, ASELEAQLESSKQQVSDLSASLKAA, VETMNKLEQTQNTIQELMAELGKLKD, IAELSNEIKEAQNTIQELVSESGQLKE, VSELEAQLESSEQRISDLTVDLKDA, LEIMDKLEQAQNTIKELMDELGELKD, LSELETQLKLLEQRVVDLSASLNAA, LAESKDTLTQKENELSSFVEVHEAHKR, VKELEARVESAEEQVKELNQNLNSS, ESTIQELSSESERLKGSHAEKDNELFSL, LRGLEAQLESSEHRVLELSESLKAA, QIMVQELTADSSKLKEQLAEKESKL, ISELEKTMEERGTELSALTQKLEDN, RAELDSMSVQKEEVEKQMVCKSEEA, EEIINKVKVHESILEEINGLSEKIKG, VQMHDKINVASSEIMALTELINNLKN, MESLRNELEMKGDEIETLMEKISNI, VKLRLSNQKLRVTEQVLTEK, AKHLEEQALLEKNLTMTHETYRG, and IKEIADKVNITVDGFQSMSEKLTEK. The tract at residues 430–456 is disordered; it reads QRDSSTRASELEAQLESSKQQVSDLSA. Residues 444–455 show a composition bias toward polar residues; sequence LESSKQQVSDLS. Residues 965–985 are disordered; sequence LKAAEEESRTMSTKISETSDE. A coiled-coil region spans residues 1496–1530; sequence VIERNHEKEKMNKEIEKKDEEIKKLGGKVREDEKE.

As to quaternary structure, interacts with COP1 coiled-coil region. In terms of tissue distribution, mainly expressed in photosynthetic and vascular tissues. Accumulates in both dark-grown and light-grown seedlings roots and shoots, leaves and flowers (at protein level).

The protein resides in the cell membrane. Its subcellular location is the cytoplasm. It localises to the cytoskeleton. In terms of biological role, positive regulator of abscisic acid (ABA)-mediated signaling pathways involved in abiotic stress responses (e.g. osmotic stress) and leading to various plant adaptation (e.g. stomata closure). This is COP1-interactive protein 1 from Arabidopsis thaliana (Mouse-ear cress).